The primary structure comprises 867 residues: 2-methylcitrate dehydratase (2-methyl-trans-aconitate forming) (867 aa).

[4Fe-4S] cluster-binding residues include Cys410, Cys476, and Cys479.

It belongs to the aconitase/IPM isomerase family. [4Fe-4S] cluster serves as cofactor.

It carries out the reaction (2S,3S)-2-methylcitrate = 2-methyl-trans-aconitate + H2O. The catalysed reaction is citrate = D-threo-isocitrate. Its pathway is organic acid metabolism; propanoate degradation. Its activity is regulated as follows. Inhibited by ferricyanide and EDTA. Functionally, involved in the catabolism of short chain fatty acids (SCFA) via the 2-methylcitrate cycle II (propionate degradation route). In vivo under anaerobic conditions, AcnD catalyzes the stereospecific dehydration of (2S,3S)-methylcitrate (2-MC) to yield the trans isomer of 2-methyl-aconitate (2-MCA). AcnD can also accept citrate and cis-aconitate, but with a lower efficiency. 2-methylisocitrate and isocitrate are not substrates. In Shewanella oneidensis (strain ATCC 700550 / JCM 31522 / CIP 106686 / LMG 19005 / NCIMB 14063 / MR-1), this protein is 2-methylcitrate dehydratase (2-methyl-trans-aconitate forming) (acnD).